Here is a 425-residue protein sequence, read N- to C-terminus: SrfA-induced gene G protein (425 aa).

Asn-25, Asn-28, and Asn-36 each carry an N-linked (GlcNAc...) asparagine glycan. Coiled-coil stretches lie at residues 41–91 (RDSE…RIRN), 172–208 (HEKQ…MKRT), and 292–340 (KFGQ…NYNI). The helical transmembrane segment at 91 to 113 (NVFKVLITILVGSIIYGTYTNQF) threads the bilayer. Residues 393 to 413 (KKPHADSNGHPKPYPHHHLLN) form a disordered region.

Its subcellular location is the membrane. The chain is SrfA-induced gene G protein (sigG) from Dictyostelium discoideum (Social amoeba).